A 278-amino-acid polypeptide reads, in one-letter code: MSRIQTRFAALKREGRGALIPFIEAGDPDAETSQTLLHGLPAAGADLIEIGVPFTDPMADGPTIQRAGRRALEAGATLAKTLAMVETFRQQDKDTPIILMGYLNPIETYGHERFCVDAAAVGVDGLIIVDLPTEEADLILPFATANGLDVIRLVAPTTDDARLPHVLNGSSGFVYYVSITGITGTVTASAEQLAQNMPRLRRVTDLPVAIGFGIRNPAQAAEAVRQGDAAIVASALIDTLAETLDDGRATDRTVPAVLDQVRQLAEAVRSARLSARGA.

Residues E49 and D60 each act as proton acceptor in the active site.

This sequence belongs to the TrpA family. Tetramer of two alpha and two beta chains.

It catalyses the reaction (1S,2R)-1-C-(indol-3-yl)glycerol 3-phosphate + L-serine = D-glyceraldehyde 3-phosphate + L-tryptophan + H2O. Its pathway is amino-acid biosynthesis; L-tryptophan biosynthesis; L-tryptophan from chorismate: step 5/5. The alpha subunit is responsible for the aldol cleavage of indoleglycerol phosphate to indole and glyceraldehyde 3-phosphate. The protein is Tryptophan synthase alpha chain of Granulibacter bethesdensis (strain ATCC BAA-1260 / CGDNIH1).